A 373-amino-acid polypeptide reads, in one-letter code: MTAPSMSRPDDVRPEVLDFKPYVPGLSIDEIRDRFGLADVVKLASNENPLGTSPVVQRTLKTKADLAFRYAQSGNPRLTRAIAAHHGVAPERVVAGNGSDEIIDLLIRVRATPGKHNIVAFRPCFSIYELQAKFCGLEFRQADLRPDFTFDWDAFLAATDENTAIAFVTTPDNPSGWCPPVSELEHVARTLPPSCLFVIDEAYMDFCGDEAAHSLLSRLDAFPNIAVLRTFSKSFGLAGLRLGYGILPERLADYLHRVRLPFSVNILAEEAGLAALEDTVFRSETLRVTAEGRAYIAEGLTALGCEVMPSWANFIMFRPPTDATDLFEALLRRGIIIRPLKSYGLPQHLRVSVGNADENRRFIEACKEILPHA.

Lys233 is subject to N6-(pyridoxal phosphate)lysine.

The protein belongs to the class-II pyridoxal-phosphate-dependent aminotransferase family. Histidinol-phosphate aminotransferase subfamily. Homodimer. Requires pyridoxal 5'-phosphate as cofactor.

It catalyses the reaction L-histidinol phosphate + 2-oxoglutarate = 3-(imidazol-4-yl)-2-oxopropyl phosphate + L-glutamate. Its pathway is amino-acid biosynthesis; L-histidine biosynthesis; L-histidine from 5-phospho-alpha-D-ribose 1-diphosphate: step 7/9. This Nitratidesulfovibrio vulgaris (strain ATCC 29579 / DSM 644 / CCUG 34227 / NCIMB 8303 / VKM B-1760 / Hildenborough) (Desulfovibrio vulgaris) protein is Histidinol-phosphate aminotransferase.